The primary structure comprises 207 residues: MSDATLAADPPRLYLASASPRRRELLLQIGLTHTVLRVPAPPGEDEPQHPGEAACDYVRRTARDKAERGQAWLHSQQLPDLPLLAADTTVIVDGIVLGKPADRADALRMLAALSGREHEVHTAVALCHQGRLREDVSITRVRMRALEQAELQRYCDSGEPYGKAGAYGIQGLAGAFVSHIAGSYTGVMGLPLYETAALLRSAGIAVP.

Catalysis depends on Asp87, which acts as the Proton acceptor.

Belongs to the Maf family. YhdE subfamily. Requires a divalent metal cation as cofactor.

The protein localises to the cytoplasm. It carries out the reaction dTTP + H2O = dTMP + diphosphate + H(+). The catalysed reaction is UTP + H2O = UMP + diphosphate + H(+). Its function is as follows. Nucleoside triphosphate pyrophosphatase that hydrolyzes dTTP and UTP. May have a dual role in cell division arrest and in preventing the incorporation of modified nucleotides into cellular nucleic acids. In Bordetella bronchiseptica (strain ATCC BAA-588 / NCTC 13252 / RB50) (Alcaligenes bronchisepticus), this protein is dTTP/UTP pyrophosphatase.